A 353-amino-acid chain; its full sequence is Survival factor 2 (353 aa).

This sequence belongs to the SVF1 family.

Its subcellular location is the cytoplasm. It is found in the nucleus. This is Survival factor 2 (svf2) from Schizosaccharomyces pombe (strain 972 / ATCC 24843) (Fission yeast).